A 584-amino-acid chain; its full sequence is MRTHYCADVNEQHIGETVTVAGWVASRRDHGGVIFIDLRDKDEVFQLVCDPADNADAHKIAEEVRDQFVLIATGKVRARGEGLENPNLKTGKVEMVVDSLTIENRSKPMPFELNDEKVNEEIKLKYRYLELRTQKAYDTFKLRSKATIATRNALDELGFLEVETPILTKSTPEGARDYLVPSRVHGGEFYALPQSPQLFKQLLMVGGFDRYFQIAKCFRDEDLRADRQPEFTQIDVEMSFCDQEDVITVAEKLISDVFIKCGFDVPTKFNRMTHSEAMEKYGSDKPDMRYDLAMVDVIDIFERCDNEIFSGIAKMPKKNRIKALRVPKGDEIFSKRQMKGFEDYVRKFGAQGLGYFQMKEDGLKGPLTKFFTEDDIQAIIDRCGLEVGDAVFFGAGEKKLVWDYMGRFRIYLAETMDIIPEDTFEFLWVMDFPMFEVEDGKVKALHHPFTQPKSLDFNDIEEIESIAYDVVLNGTELGGGSIRIHKEDVQEEVFKLLGISEEEAQSKFGFLLDALKFGAPPHGGFALGLDRMIMIMTGASSIRDVIAFPKTQKAQCLLTQAPSEVDNEQLKELSIRVRQAAPTA.

Residue E173 coordinates L-aspartate. The aspartate stretch occupies residues 197–200; the sequence is QLFK. Residue R219 coordinates L-aspartate. ATP is bound by residues 219–221 and Q228; that span reads RDE. H446 contacts L-aspartate. E476 is a binding site for ATP. R483 is an L-aspartate binding site. 528–531 is a binding site for ATP; sequence GLDR.

Belongs to the class-II aminoacyl-tRNA synthetase family. Type 1 subfamily. Homodimer.

It is found in the cytoplasm. The catalysed reaction is tRNA(Asx) + L-aspartate + ATP = L-aspartyl-tRNA(Asx) + AMP + diphosphate. In terms of biological role, aspartyl-tRNA synthetase with relaxed tRNA specificity since it is able to aspartylate not only its cognate tRNA(Asp) but also tRNA(Asn). Reaction proceeds in two steps: L-aspartate is first activated by ATP to form Asp-AMP and then transferred to the acceptor end of tRNA(Asp/Asn). The chain is Aspartate--tRNA(Asp/Asn) ligase from Sulfurovum sp. (strain NBC37-1).